Here is a 69-residue protein sequence, read N- to C-terminus: MSRRCSVSGKGPLVGNNVSHANNKTKRRQLPNLRSVKITMEDGTTKRVKVAASTLRTMKKKAAQAAAAN.

The interval 1-27 (MSRRCSVSGKGPLVGNNVSHANNKTKR) is disordered.

The protein belongs to the bacterial ribosomal protein bL28 family.

The protein is Large ribosomal subunit protein bL28 of Sulfurovum sp. (strain NBC37-1).